Consider the following 132-residue polypeptide: Interleukin-13 (132 aa).

The first 18 residues, 1-18 (MALLLTTVIALTCLGGFA), serve as a signal peptide directing secretion. N-linked (GlcNAc...) asparagine glycosylation is found at N38, N49, N57, and N72. Disulfide bonds link C48–C76 and C64–C90.

It belongs to the IL-4/IL-13 family. Interacts with IL13RA2.

Its subcellular location is the secreted. Its function is as follows. Cytokine that plays important roles in allergic inflammation and immune response to parasite infection. Synergizes with IL2 in regulating interferon-gamma synthesis. Stimulates B-cell proliferation, and activation of eosinophils, basophils, and mast cells. Plays an important role in controlling IL33 activity by modulating the production of transmembrane and soluble forms of interleukin-1 receptor-like 1/IL1RL1. Displays the capacity to antagonize Th1-driven proinflammatory immune response and downregulates synthesis of many proinflammatory cytokines including IL1, IL6, IL10, IL12 and TNF-alpha through a mechanism that partially involves suppression of NF-kappa-B. Also functions on nonhematopoietic cells, including endothelial cells where it induces vascular cell adhesion protein 1/VCAM1, which is important in the recruitment of eosinophils. Exerts its biological effects through its receptors which comprises the IL4R chain and the IL13RA1 chain, to activate JAK1 and TYK2, leading to the activation of STAT6. Aside from IL13RA1, another receptor IL13RA2 acts as a high affinity decoy for IL13 and mediates internalization and depletion of extracellular IL13. The polypeptide is Interleukin-13 (IL13) (Macaca mulatta (Rhesus macaque)).